We begin with the raw amino-acid sequence, 155 residues long: Troponin C, body wall muscle (155 aa).

Val-1 bears the N-acetylvaline mark. EF-hand domains lie at 7-43 (DEKS…LGQN), 44-79 (PTEK…QMQA), 88-121 (REEK…TGEN), and 122-155 (VETW…KFVQ). Residues Asp-57, Asp-59, Ser-61, Thr-63, and Glu-68 each coordinate Ca(2+). Ca(2+)-binding residues include Asp-135, Asn-137, Asp-139, Gln-141, and Glu-146.

It belongs to the troponin C family.

Functionally, troponin is the central regulatory protein of muscle contraction. Tn consists of three components: Tn-I which is the inhibitor of actomyosin ATPase, Tn-T which contains the binding site for tropomyosin and Tn-C. The binding of calcium to Tn-C abolishes the inhibitory action of Tn on actin filaments. This is Troponin C, body wall muscle from Halocynthia roretzi (Sea squirt).